A 234-amino-acid chain; its full sequence is Synaptogyrin-1 (234 aa).

Residue Met-1 is modified to N-acetylmethionine. Topologically, residues 1–23 (MEGGAYGAGKAGGAFDPYALVRQ) are cytoplasmic. Positions 20 to 173 (LVRQPHTILR…QAVLAFQRYQ (154 aa)) constitute an MARVEL domain. A helical transmembrane segment spans residues 24–44 (PHTILRVVSWLFSIVVFGSIV). Topologically, residues 45 to 71 (NEGYLNSASEGEEFCIYNRNPNACSYG) are lumenal. Residues 72–92 (VAVGVLAFLTCLLYLALDVYF) traverse the membrane as a helical segment. The Cytoplasmic portion of the chain corresponds to 93 to 103 (PQISSVKDRKK). Residues 104–124 (AVLSDIGVSAFWAFLWFVGFC) form a helical membrane-spanning segment. At 125 to 148 (YLANQWQVSKPKDNPLNEGTDAAR) the chain is on the lumenal side. The chain crosses the membrane as a helical span at residues 149–169 (AAIAFSFFSIFTWAGQAVLAF). The Cytoplasmic portion of the chain corresponds to 170–234 (QRYQIGADSA…EPQGYQSQGY (65 aa)). Residues 192–234 (SSMPYAPYVEPSTGPDPAGMGGTYQQPANTFDTEPQGYQSQGY) form a disordered region. Over residues 214–234 (TYQQPANTFDTEPQGYQSQGY) the composition is skewed to polar residues.

It belongs to the synaptogyrin family.

It localises to the cytoplasmic vesicle. It is found in the secretory vesicle. The protein resides in the synaptic vesicle membrane. The protein localises to the melanosome. Functionally, may play a role in regulated exocytosis. Modulates the localization of synaptophysin/SYP into synaptic-like microvesicles and may therefore play a role in synaptic-like microvesicle formation and/or maturation. Involved in the regulation of short-term and long-term synaptic plasticity. In Pongo abelii (Sumatran orangutan), this protein is Synaptogyrin-1.